The chain runs to 155 residues: MWSLGGLRLAAGHCLRLYERNASSSLRFTRNTDLKRINGFCTKPQESPKTPTQSYRHGVPLHKPTDFEKKILLWSGRFKKEEEIPETISFEMLDAAKNKLRVKVSYLMIALTVAGCIYMVIEGKKAAKRHESLTSLNLERKARLREEAAMKAKTD.

The tract at residues 77–103 (RFKKEEEIPETISFEMLDAAKNKLRVK) is required for proapoptotic activity. A helical membrane pass occupies residues 104–121 (VSYLMIALTVAGCIYMVI).

The protein belongs to the UPF0389 family. Interacts with HSP90AB1; HSP90AB1 is essential for FAM162A mitochondrial localization and pro-apoptotic activity. Interacts with VDAC2; the interaction is probably involved in inducing mitochondrial permeability transition.

It localises to the mitochondrion membrane. Functionally, proposed to be involved in regulation of apoptosis; the exact mechanism may differ between cell types/tissues. May be involved in hypoxia-induced cell death of transformed cells implicating cytochrome C release and caspase activation (such as CASP9) and inducing mitochondrial permeability transition. May be involved in hypoxia-induced cell death of neuronal cells probably by promoting release of AIFM1 from mitochondria to cytoplasm and its translocation to the nucleus; however, the involvement of caspases has been reported conflictingly. The chain is Protein FAM162A (Fam162a) from Mus musculus (Mouse).